The primary structure comprises 386 residues: L-olivosyl-oleandolide 3-O-methyltransferase (386 aa).

Residues S166, 195–201 (EIGIGGY), S210, D227, 245–246 (RQ), and D268 each bind S-adenosyl-L-methionine. A Mg(2+)-binding site is contributed by D268. H271 acts as the Proton acceptor in catalysis. 2 residues coordinate Mg(2+): E296 and D297. The interval 364 to 386 (RRAINKEGGIPHTVPREPFWNDN) is disordered.

It belongs to the methyltransferase OleY/MycE family. In terms of assembly, homodimer. The cofactor is Mg(2+).

It carries out the reaction L-olivosyl-oleandolide + S-adenosyl-L-methionine = L-oleandrosyl-oleandolide + S-adenosyl-L-homocysteine + H(+). Its pathway is antibiotic biosynthesis. Its function is as follows. 3-O-methyltransferase involved in the synthesis of L-oleandrose, a sugar attached to oleandomycin, a macrolide antibiotic. Acts on monoglycosylated macrolactones and mediates the conversion of L-olivosyl-erythronolide B into its 3-O-methylated derivative, L-oleandrosyl-erythronolide B. Also able to methylate other monoglycosylated derivatives, such as L-rhamnosyl- and L-mycarosyl-erythronolide B. In Streptomyces antibioticus, this protein is L-olivosyl-oleandolide 3-O-methyltransferase (oleY).